The following is a 360-amino-acid chain: S-adenosylmethionine:tRNA ribosyltransferase-isomerase (360 aa).

This sequence belongs to the QueA family. Monomer.

The protein localises to the cytoplasm. The catalysed reaction is 7-aminomethyl-7-carbaguanosine(34) in tRNA + S-adenosyl-L-methionine = epoxyqueuosine(34) in tRNA + adenine + L-methionine + 2 H(+). The protein operates within tRNA modification; tRNA-queuosine biosynthesis. Functionally, transfers and isomerizes the ribose moiety from AdoMet to the 7-aminomethyl group of 7-deazaguanine (preQ1-tRNA) to give epoxyqueuosine (oQ-tRNA). The protein is S-adenosylmethionine:tRNA ribosyltransferase-isomerase of Rhodopseudomonas palustris (strain ATCC BAA-98 / CGA009).